The primary structure comprises 619 residues: Manganese lipoxygenase (619 aa).

Residues 1–16 (MRVLVWIAGLAPLAVA) form the signal peptide. N-linked (GlcNAc...) asparagine glycans are attached at residues asparagine 32, asparagine 42, asparagine 62, asparagine 86, asparagine 164, and asparagine 229. The 565-residue stretch at 55–619 (TLPCEDGNST…PGNIPFYLSV (565 aa)) folds into the Lipoxygenase domain. Mn(2+)-binding residues include histidine 298, histidine 303, histidine 483, and asparagine 487. N-linked (GlcNAc...) asparagine glycans are attached at residues asparagine 515 and asparagine 549. Valine 619 contributes to the Mn(2+) binding site.

Belongs to the lipoxygenase family. Manganese lipoxygenase subfamily. Mn(2+) serves as cofactor.

The protein resides in the secreted. It catalyses the reaction (9Z,12Z)-octadecadienoate + O2 = (9S)-hydroperoxy-(10E,12Z)-octadecadienoate. It carries out the reaction (9Z,12Z)-octadecadienoate + O2 = (11S)-hydroperoxy-(9Z,12Z)-octadecadienoate. The enzyme catalyses (9Z,12Z)-octadecadienoate + O2 = (13R)-hydroperoxy-(9Z,11E)-octadecadienoate. The catalysed reaction is (9Z,12Z,15Z)-octadecatrienoate + O2 = (9S)-hydroperoxy-(10E,12Z,15Z)-octadecatrienoate. It catalyses the reaction (9Z,12Z,15Z)-octadecatrienoate + O2 = (11R)-hydroperoxy-(9Z,12Z,15Z)-octadecatrienoate. It carries out the reaction (9Z,12Z,15Z)-octadecatrienoate + O2 = (13R)-hydroperoxy-(9Z,11E,15Z)-octadecatrienoate. The enzyme catalyses (9S)-hydroperoxy-(10E,12Z,15Z)-octadecatrienoate + O2 = (9S,16S)-dihydroperoxy-(10E,12Z,14E)-octadecatrienoate. In terms of biological role, lipoxygenase that metabolizes linoleic and alpha-linolenic acids to 9S-, 11- and 13R-hydroperoxy fatty acids. At the end of lipoxygenation, the intermediate product 11S-HPODE from linoleic acid is then transformed into 9S-HPODE and 13R-HPODE as the final products. The intermediate product 11R-HPOTrE from alpha-linolenic acid is transformed into 9S-HPOTrE and 13R-HPOTrE as the final products. 9S-HPOTrE is further oxidized by the enzyme to 9S,16S-DiHPOTrE as the end product. This chain is Manganese lipoxygenase, found in Pyricularia oryzae (strain 70-15 / ATCC MYA-4617 / FGSC 8958) (Rice blast fungus).